The chain runs to 162 residues: Protein NrdI (162 aa).

Belongs to the NrdI family.

In terms of biological role, probably involved in ribonucleotide reductase function. In Streptococcus pyogenes serotype M2 (strain MGAS10270), this protein is Protein NrdI.